A 296-amino-acid polypeptide reads, in one-letter code: Homoserine kinase (296 aa).

84 to 94 (PLARGLGSSSS) is an ATP binding site.

It belongs to the GHMP kinase family. Homoserine kinase subfamily.

The protein resides in the cytoplasm. It catalyses the reaction L-homoserine + ATP = O-phospho-L-homoserine + ADP + H(+). Its pathway is amino-acid biosynthesis; L-threonine biosynthesis; L-threonine from L-aspartate: step 4/5. In terms of biological role, catalyzes the ATP-dependent phosphorylation of L-homoserine to L-homoserine phosphate. The polypeptide is Homoserine kinase (thrB) (Lactococcus lactis subsp. cremoris (Streptococcus cremoris)).